The primary structure comprises 261 residues: Hemin import ATP-binding protein HmuV (261 aa).

The ABC transporter domain maps to 2-243; sequence LCANNVSAQI…ALLKRVYNIN (242 aa). An ATP-binding site is contributed by 34-41; sequence GPNGAGKS.

The protein belongs to the ABC transporter superfamily. Heme (hemin) importer (TC 3.A.1.14.5) family. The complex is composed of two ATP-binding proteins (HmuV), two transmembrane proteins (HmuU) and a solute-binding protein (HmuT).

The protein localises to the cell inner membrane. Its function is as follows. Part of the ABC transporter complex HmuTUV involved in hemin import. Responsible for energy coupling to the transport system. This Pseudoalteromonas translucida (strain TAC 125) protein is Hemin import ATP-binding protein HmuV.